Consider the following 525-residue polypeptide: MMDDKHGRYGACDRCRGQKLRCVGAGKPIPNSSSRLLRNEIPCDRCRRAKVECYSVRPAPRRAASNVKEQMIATQAASERSSSLAYHTSGPVVSPPNSLVTAASKPHPNSLSFNHPRSDAVAAPGGLQTRRQSRDTDSLGDMPSMPHEWMAYLHDHKMDDRQGLGMETPPLIESDLNLSRDPAMDSMHEHNMMMELIHQDHQEEWNSGPPELEAYPDPIVPPNPAPLKARKLTSPDCDDYPYGHTRRSSHTPTQPPEPAGRSCIQELAQFNEMLLRDKCSLEDTSARRGYKDSWLSIGRTLHHCQQFFSILKRIKYSRPDSQLSADRARSQWSSLPEGTSLADGAPTDSPQARRSLARGATPCSSSLARSSSTSSAASTSYLGLSTLLSILFCYTYILQAYEDILTSILHAVTRPTPTIPPTLSGLRIDGFQLDGHHTLQLECLLHVSYNLLEKIENILFGSAGPEELSNPVKYGILGDKLSAGLIDALFEHNETNGLLHCQGKREVAAKRLIREIQAALKQLDL.

A DNA-binding region (zn(2)-C6 fungal-type) is located at residues 12-53 (CDRCRGQKLRCVGAGKPIPNSSSRLLRNEIPCDRCRRAKVEC). Disordered regions lie at residues 80-142 (RSSS…LGDM), 204-260 (EWNS…EPAG), and 327-371 (RARS…ARSS). The segment covering 95-115 (PPNSLVTAASKPHPNSLSFNH) has biased composition (polar residues). Polar residues predominate over residues 327-337 (RARSQWSSLPE).

It localises to the nucleus. Functionally, transcription factor that regulates the expression of the gene cluster that mediates the biosynthesis of the isoquinoline alkaloids fumisoquin A, fumisoquin B and fumisoquin C; as well as small amounts of fumipyrrole as a shunt metabolite. The products of the cluster lead to a brown coloration and are important for growth and conidiation. This chain is C6 finger transcription factor fsqA, found in Aspergillus fumigatus (strain ATCC MYA-4609 / CBS 101355 / FGSC A1100 / Af293) (Neosartorya fumigata).